Here is a 290-residue protein sequence, read N- to C-terminus: MTLTQRLVHYEKLMRLDKPIGILLLLWPTLWGLWLAAEGVPRLDILLIFVLGTVLMRSAGCVVNDYADRNFDGHVERTRTRPLALGAVSTREALLLAAGLSLVAFLLIQPLNRLTIELSFVALFLAASYPFTKRFFAMPQAYLGIAFSFGIPMAFAAQTGEVPFPAWFLMGANLLWVIAYDTEYAMVDKVDDLRIGIKTSAITFGRFDVVGVVLCHMAFLAGMVAIGLLQNLGVIYYIGLATALGLILYQYRLIHDRDRARCFKAFLHNNWVGATIFAGIVLDYLVRAAS.

A run of 9 helical transmembrane segments spans residues 20-40 (IGIL…AEGV), 43-63 (LDIL…GCVV), 92-112 (EALL…QPLN), 114-131 (LTIE…SYPF), 135-155 (FFAM…PMAF), 160-180 (GEVP…VIAY), 209-229 (VVGV…IGLL), 231-251 (NLGV…LYQY), and 266-286 (FLHN…DYLV).

The protein belongs to the UbiA prenyltransferase family. Requires Mg(2+) as cofactor.

It is found in the cell inner membrane. It carries out the reaction all-trans-octaprenyl diphosphate + 4-hydroxybenzoate = 4-hydroxy-3-(all-trans-octaprenyl)benzoate + diphosphate. The protein operates within cofactor biosynthesis; ubiquinone biosynthesis. Catalyzes the prenylation of para-hydroxybenzoate (PHB) with an all-trans polyprenyl group. Mediates the second step in the final reaction sequence of ubiquinone-8 (UQ-8) biosynthesis, which is the condensation of the polyisoprenoid side chain with PHB, generating the first membrane-bound Q intermediate 3-octaprenyl-4-hydroxybenzoate. This is 4-hydroxybenzoate octaprenyltransferase from Nitrosospira multiformis (strain ATCC 25196 / NCIMB 11849 / C 71).